A 47-amino-acid chain; its full sequence is Short transmembrane mitochondrial protein 1 (47 aa).

A helical transmembrane segment spans residues 7–23 (GFTLGNVVGMYLAQNYD).

It belongs to the STMP1 family. Interacts with components of the ubiquinol-cytochrome c oxidoreductase (cytochrome b-c1 complex, complex III, CIII), such as UQCRC1/QCR1, UQCRC2/QCR2 and UQCR10/QCR9. Interacts with components of the cytochrome c oxidase (mitochondrial respiratory chain complex IV) complex, such as MT-CO2. Expressed in monocytes and dendritic cells.

It is found in the mitochondrion inner membrane. The protein resides in the mitochondrion outer membrane. It localises to the mitochondrion intermembrane space. Microprotein involved in mitochondrial respiratory chain complex III (ubiquinol-cytochrome c oxidoreductase) and complex IV (mitochondrial cytochrome c oxidase complex) assembly. Required for the formation of mitochondrial supercomplexes (SCs). Also required for the activation of the NLRP3 inflammasome. The polypeptide is Short transmembrane mitochondrial protein 1 (Homo sapiens (Human)).